Consider the following 249-residue polypeptide: Aspartate/glutamate leucyltransferase (249 aa).

It belongs to the R-transferase family. Bpt subfamily.

It is found in the cytoplasm. The enzyme catalyses N-terminal L-glutamyl-[protein] + L-leucyl-tRNA(Leu) = N-terminal L-leucyl-L-glutamyl-[protein] + tRNA(Leu) + H(+). The catalysed reaction is N-terminal L-aspartyl-[protein] + L-leucyl-tRNA(Leu) = N-terminal L-leucyl-L-aspartyl-[protein] + tRNA(Leu) + H(+). Its function is as follows. Functions in the N-end rule pathway of protein degradation where it conjugates Leu from its aminoacyl-tRNA to the N-termini of proteins containing an N-terminal aspartate or glutamate. The sequence is that of Aspartate/glutamate leucyltransferase from Brucella abortus (strain S19).